The sequence spans 370 residues: MLTFDIINQSLESRARTGRITTAHGVIETPIFMPVGTLGTVKAVSVEELKACQAQIILGNTYHLYLRPGCEVMAHMGGLHPFMNWDRPILTDSGGFQFFSLAKLAKFKDEGVSFQSHIDGSRHLFTPERAVEIQSILGSDIMMSLDWCMGYPATRKEAMGALEKTTQWAERGRNFWIEQGRVNNLFGIVQGGMFADLRSISARQLADLDFPGYAIGGLSVGEPTELMYEMADHTVPQLPLEKPKYVMGVGTPENLVELAGMGVDMFDCVMPSRNARNGQLFTSTGTMNISNAAFRLDESPLDAECSCYTCQNYSRAYLRHLYKSRELLAYRLNTIHNLHYYLDLMHQMRNAINQGRFMAFKQEFYRKRER.

The Proton acceptor role is filled by Asp92. Substrate contacts are provided by residues 92-96 (DSGGF), Asp146, Gln190, and Gly217. Residues 248-254 (GVGTPEN) are RNA binding. Asp267 (nucleophile) is an active-site residue. Residues Cys305, Cys307, Cys310, and His336 each contribute to the Zn(2+) site.

It belongs to the queuine tRNA-ribosyltransferase family. In terms of assembly, homodimer. Within each dimer, one monomer is responsible for RNA recognition and catalysis, while the other monomer binds to the replacement base PreQ1. The cofactor is Zn(2+).

The enzyme catalyses 7-aminomethyl-7-carbaguanine + guanosine(34) in tRNA = 7-aminomethyl-7-carbaguanosine(34) in tRNA + guanine. Its pathway is tRNA modification; tRNA-queuosine biosynthesis. Functionally, catalyzes the base-exchange of a guanine (G) residue with the queuine precursor 7-aminomethyl-7-deazaguanine (PreQ1) at position 34 (anticodon wobble position) in tRNAs with GU(N) anticodons (tRNA-Asp, -Asn, -His and -Tyr). Catalysis occurs through a double-displacement mechanism. The nucleophile active site attacks the C1' of nucleotide 34 to detach the guanine base from the RNA, forming a covalent enzyme-RNA intermediate. The proton acceptor active site deprotonates the incoming PreQ1, allowing a nucleophilic attack on the C1' of the ribose to form the product. After dissociation, two additional enzymatic reactions on the tRNA convert PreQ1 to queuine (Q), resulting in the hypermodified nucleoside queuosine (7-(((4,5-cis-dihydroxy-2-cyclopenten-1-yl)amino)methyl)-7-deazaguanosine). This Desulforapulum autotrophicum (strain ATCC 43914 / DSM 3382 / VKM B-1955 / HRM2) (Desulfobacterium autotrophicum) protein is Queuine tRNA-ribosyltransferase.